The chain runs to 227 residues: 7-cyano-7-deazaguanine synthase (227 aa).

Position 8–18 (8–18) interacts with ATP; it reads FSGGQDSTTCL. The Zn(2+) site is built by cysteine 187, cysteine 196, cysteine 199, and cysteine 202.

The protein belongs to the QueC family. The cofactor is Zn(2+).

It carries out the reaction 7-carboxy-7-deazaguanine + NH4(+) + ATP = 7-cyano-7-deazaguanine + ADP + phosphate + H2O + H(+). It participates in purine metabolism; 7-cyano-7-deazaguanine biosynthesis. Functionally, catalyzes the ATP-dependent conversion of 7-carboxy-7-deazaguanine (CDG) to 7-cyano-7-deazaguanine (preQ(0)). This Shewanella pealeana (strain ATCC 700345 / ANG-SQ1) protein is 7-cyano-7-deazaguanine synthase.